Here is a 141-residue protein sequence, read N- to C-terminus: Large ribosomal subunit protein mL42 (141 aa).

Residues 1–31 (MTAAVKWAVSHRTIWRHLFPIQNGAISSACH) constitute a mitochondrion transit peptide.

The protein belongs to the mitochondrion-specific ribosomal protein mL42 family. Component of the mitochondrial ribosome large subunit (39S) which comprises a 16S rRNA and about 50 distinct proteins. Component of the mitochondrial ribosome small subunit (28S) which comprises a 12S rRNA and about 30 distinct proteins.

It is found in the mitochondrion. This chain is Large ribosomal subunit protein mL42 (Mrpl42), found in Rattus norvegicus (Rat).